The primary structure comprises 115 residues: Large ribosomal subunit protein bL19 (115 aa).

This sequence belongs to the bacterial ribosomal protein bL19 family.

In terms of biological role, this protein is located at the 30S-50S ribosomal subunit interface and may play a role in the structure and function of the aminoacyl-tRNA binding site. This Tropheryma whipplei (strain TW08/27) (Whipple's bacillus) protein is Large ribosomal subunit protein bL19.